Consider the following 290-residue polypeptide: Pyridoxal 5'-phosphate synthase subunit PdxS (290 aa).

Position 22 (aspartate 22) interacts with D-ribose 5-phosphate. Lysine 79 (schiff-base intermediate with D-ribose 5-phosphate) is an active-site residue. Residue glycine 151 coordinates D-ribose 5-phosphate. Position 163 (arginine 163) interacts with D-glyceraldehyde 3-phosphate. Residues glycine 212 and 233 to 234 contribute to the D-ribose 5-phosphate site; that span reads GS.

It belongs to the PdxS/SNZ family. In terms of assembly, in the presence of PdxT, forms a dodecamer of heterodimers.

The catalysed reaction is aldehydo-D-ribose 5-phosphate + D-glyceraldehyde 3-phosphate + L-glutamine = pyridoxal 5'-phosphate + L-glutamate + phosphate + 3 H2O + H(+). The protein operates within cofactor biosynthesis; pyridoxal 5'-phosphate biosynthesis. Catalyzes the formation of pyridoxal 5'-phosphate from ribose 5-phosphate (RBP), glyceraldehyde 3-phosphate (G3P) and ammonia. The ammonia is provided by the PdxT subunit. Can also use ribulose 5-phosphate and dihydroxyacetone phosphate as substrates, resulting from enzyme-catalyzed isomerization of RBP and G3P, respectively. This Clostridium botulinum (strain Langeland / NCTC 10281 / Type F) protein is Pyridoxal 5'-phosphate synthase subunit PdxS.